Here is a 331-residue protein sequence, read N- to C-terminus: Hydroxysteroid dehydrogenase-like protein 1 (331 aa).

Residues 2-82 form a required for mitochondria translocation region; it reads AAVDRFNLLY…TGSTDGIGKA (81 aa). Residues 74–80 and D125 contribute to the NADP(+) site; that span reads GSTDGIG. S205 lines the substrate pocket. Y218 functions as the Proton acceptor in the catalytic mechanism. Position 222 (K222) interacts with NADP(+).

Belongs to the short-chain dehydrogenases/reductases (SDR) family. 17-beta-HSD 3 subfamily.

The protein resides in the mitochondrion. In terms of biological role, may catalyze the metabolism of steroid hormones and thus play an important role in sex differentiation, the emergence and maintenance of the secondary sexual characters, and the regulation of endocrine. In Gallus gallus (Chicken), this protein is Hydroxysteroid dehydrogenase-like protein 1 (HSDL1).